Consider the following 522-residue polypeptide: Protein disulfide-isomerase (522 aa).

Positions 1–28 (MKFSAGAVLSWSSLLLASSVFAQQEAVA) form a signal peptide, or 22. The 113-residue stretch at 29 to 141 (PEDSAVVKLA…VQFMIKQSQP (113 aa)) folds into the Thioredoxin 1 domain. Active-site nucleophile residues include Cys61 and Cys64. A disulfide bond links Cys61 and Cys64. N-linked (GlcNAc...) asparagine glycans are attached at residues Asn82, Asn117, Asn155, and Asn174. The Thioredoxin 2 domain maps to 356–485 (FLKGDASPIV…LFDFIKENGH (130 aa)). Active-site nucleophile residues include Cys406 and Cys409. Cys406 and Cys409 are disulfide-bonded. Asn425 carries N-linked (GlcNAc...) asparagine glycosylation. The disordered stretch occupies residues 497–522 (AQEKAAEEADADAELADEEDAIHDEL). Positions 504 to 522 (EADADAELADEEDAIHDEL) are enriched in acidic residues. A Prevents secretion from ER motif is present at residues 519-522 (HDEL).

The protein belongs to the protein disulfide isomerase family. Interacts with EPS1, KAR2 and MNL1. In terms of processing, the N-terminus is blocked.

It is found in the endoplasmic reticulum lumen. The catalysed reaction is Catalyzes the rearrangement of -S-S- bonds in proteins.. Its function is as follows. Protein disulfide isomerase of ER lumen required for formation of disulfide bonds in secretory and cell-surface proteins and which unscrambles non-native disulfide bonds. Forms a complex with MNL1 to process unfolded protein-bound Man8GlcNAc2 oligosaccharides to Man7GlcNAc2, promoting degradation in unfolded protein response. The polypeptide is Protein disulfide-isomerase (PDI1) (Saccharomyces cerevisiae (strain ATCC 204508 / S288c) (Baker's yeast)).